The chain runs to 302 residues: Urease accessory protein UreD 2 (302 aa).

This sequence belongs to the UreD family. UreD, UreF and UreG form a complex that acts as a GTP-hydrolysis-dependent molecular chaperone, activating the urease apoprotein by helping to assemble the nickel containing metallocenter of UreC. The UreE protein probably delivers the nickel.

It localises to the cytoplasm. In terms of biological role, required for maturation of urease via the functional incorporation of the urease nickel metallocenter. This is Urease accessory protein UreD 2 from Brucella melitensis biotype 1 (strain ATCC 23456 / CCUG 17765 / NCTC 10094 / 16M).